Here is a 529-residue protein sequence, read N- to C-terminus: Bifunctional purine biosynthesis protein PurH (529 aa).

Residues 1–148 (MQQRRPVRRA…KNHKDVAIVV (148 aa)) enclose the MGS-like domain.

The protein belongs to the PurH family.

The enzyme catalyses (6R)-10-formyltetrahydrofolate + 5-amino-1-(5-phospho-beta-D-ribosyl)imidazole-4-carboxamide = 5-formamido-1-(5-phospho-D-ribosyl)imidazole-4-carboxamide + (6S)-5,6,7,8-tetrahydrofolate. It catalyses the reaction IMP + H2O = 5-formamido-1-(5-phospho-D-ribosyl)imidazole-4-carboxamide. It participates in purine metabolism; IMP biosynthesis via de novo pathway; 5-formamido-1-(5-phospho-D-ribosyl)imidazole-4-carboxamide from 5-amino-1-(5-phospho-D-ribosyl)imidazole-4-carboxamide (10-formyl THF route): step 1/1. It functions in the pathway purine metabolism; IMP biosynthesis via de novo pathway; IMP from 5-formamido-1-(5-phospho-D-ribosyl)imidazole-4-carboxamide: step 1/1. The protein is Bifunctional purine biosynthesis protein PurH of Salmonella heidelberg (strain SL476).